Here is an 83-residue protein sequence, read N- to C-terminus: Cytochrome b559 subunit alpha (83 aa).

A helical transmembrane segment spans residues 21-35; that stretch reads VIHSITVPSLFIAGW. Histidine 23 contacts heme.

It belongs to the PsbE/PsbF family. Heterodimer of an alpha subunit and a beta subunit. PSII is composed of 1 copy each of membrane proteins PsbA, PsbB, PsbC, PsbD, PsbE, PsbF, PsbH, PsbI, PsbJ, PsbK, PsbL, PsbM, PsbT, PsbX, PsbY, PsbZ, Psb30/Ycf12, at least 3 peripheral proteins of the oxygen-evolving complex and a large number of cofactors. It forms dimeric complexes. Heme b serves as cofactor.

Its subcellular location is the plastid. The protein localises to the chloroplast thylakoid membrane. In terms of biological role, this b-type cytochrome is tightly associated with the reaction center of photosystem II (PSII). PSII is a light-driven water:plastoquinone oxidoreductase that uses light energy to abstract electrons from H(2)O, generating O(2) and a proton gradient subsequently used for ATP formation. It consists of a core antenna complex that captures photons, and an electron transfer chain that converts photonic excitation into a charge separation. The chain is Cytochrome b559 subunit alpha from Oltmannsiellopsis viridis (Marine flagellate).